The sequence spans 424 residues: GDP-fucose protein O-fucosyltransferase 2 (424 aa).

Positions Met1–Ala20 are cleaved as a signal peptide. Residue Gly51–Asn55 participates in GDP-beta-L-fucose binding. Glu52 serves as the catalytic Proton acceptor. A disulfide bond links Cys154 and Cys187. The N-linked (GlcNAc...) asparagine glycan is linked to Asn205. Residues His288 to Arg290, Asp366, and Thr383 to Phe384 contribute to the GDP-beta-L-fucose site. Residues Cys407 and Cys414 are joined by a disulfide bond.

This sequence belongs to the glycosyltransferase 68 family. Expressed in the anterior part of embryos, in the hypodermal and neuronal cells of the head. Expressed at different levels in a variety of cell types after hatching, including neuronal, hypodermal, muscle, intestinal, and somatic gonadal cells. Expressed in the nerve ring around the pharynx, in dorsal and ventral nerve cords, intestine, and a variety of hypodermal cells of L1-L3 larvae. Expressed in gonadal sheath cells, spermatheca, and tissues surrounding the vulva of adult hermaphrodites, and in the body wall muscle and hypodermal cells of adults of both sexes.

It is found in the endoplasmic reticulum. The protein localises to the golgi apparatus. The catalysed reaction is L-seryl-[protein] + GDP-beta-L-fucose = 3-O-(alpha-L-fucosyl)-L-seryl-[protein] + GDP + H(+). It catalyses the reaction L-threonyl-[protein] + GDP-beta-L-fucose = 3-O-(alpha-L-fucosyl)-L-threonyl-[protein] + GDP + H(+). Its pathway is protein modification; protein glycosylation. Catalyzes the reaction that attaches fucose through an O-glycosidic linkage to a conserved serine or threonine residue in the consensus sequence C1-X-X-S/T-C2 of thrombospondin type I repeats (TSRs) where C1 and C2 are the first and second cysteines of the repeat, respectively. O-fucosylates members of several protein families including the ADAMTS superfamily and the thrombospondin (TSP) and spondin families. The chain is GDP-fucose protein O-fucosyltransferase 2 (pad-2) from Caenorhabditis elegans.